Reading from the N-terminus, the 411-residue chain is Multifunctional CCA protein (411 aa).

Residues glycine 8 and arginine 11 each coordinate ATP. Residues glycine 8 and arginine 11 each contribute to the CTP site. Positions 21 and 23 each coordinate Mg(2+). The ATP site is built by arginine 91, arginine 137, and arginine 140. Positions 91, 137, and 140 each coordinate CTP. The HD domain occupies 226-327 (TGVHVMLVID…LRFLQETDAL (102 aa)).

It belongs to the tRNA nucleotidyltransferase/poly(A) polymerase family. Bacterial CCA-adding enzyme type 1 subfamily. In terms of assembly, monomer. Can also form homodimers and oligomers. Requires Mg(2+) as cofactor. Ni(2+) serves as cofactor.

It catalyses the reaction a tRNA precursor + 2 CTP + ATP = a tRNA with a 3' CCA end + 3 diphosphate. It carries out the reaction a tRNA with a 3' CCA end + 2 CTP + ATP = a tRNA with a 3' CCACCA end + 3 diphosphate. Catalyzes the addition and repair of the essential 3'-terminal CCA sequence in tRNAs without using a nucleic acid template. Adds these three nucleotides in the order of C, C, and A to the tRNA nucleotide-73, using CTP and ATP as substrates and producing inorganic pyrophosphate. tRNA 3'-terminal CCA addition is required both for tRNA processing and repair. Also involved in tRNA surveillance by mediating tandem CCA addition to generate a CCACCA at the 3' terminus of unstable tRNAs. While stable tRNAs receive only 3'-terminal CCA, unstable tRNAs are marked with CCACCA and rapidly degraded. This is Multifunctional CCA protein from Methylobacillus flagellatus (strain ATCC 51484 / DSM 6875 / VKM B-1610 / KT).